Consider the following 443-residue polypeptide: uncharacterized protein (443 aa).

The next 10 helical transmembrane spans lie at valine 7 to threonine 29, tyrosine 68 to threonine 87, valine 94 to phenylalanine 111, valine 121 to alanine 143, isoleucine 150 to cysteine 164, isoleucine 179 to phenylalanine 201, leucine 206 to serine 225, isoleucine 358 to asparagine 375, leucine 382 to glycine 399, and leucine 409 to isoleucine 431.

It localises to the cell membrane. This is an uncharacterized protein from Escherichia coli (strain K12).